The primary structure comprises 217 residues: N-(5'-phosphoribosyl)anthranilate isomerase (217 aa).

The protein belongs to the TrpF family.

It carries out the reaction N-(5-phospho-beta-D-ribosyl)anthranilate = 1-(2-carboxyphenylamino)-1-deoxy-D-ribulose 5-phosphate. It participates in amino-acid biosynthesis; L-tryptophan biosynthesis; L-tryptophan from chorismate: step 3/5. This is N-(5'-phosphoribosyl)anthranilate isomerase from Synechococcus elongatus (strain ATCC 33912 / PCC 7942 / FACHB-805) (Anacystis nidulans R2).